A 463-amino-acid chain; its full sequence is Aromatic amino acid transport protein AroP (463 aa).

The next 12 membrane-spanning stretches (helical) occupy residues 18 to 38 (TMMG…GVGI), 40 to 60 (AAGP…VLVM), 84 to 104 (FGHW…IMVM), 117 to 137 (AWFG…FAVV), 157 to 177 (VAVI…WLPG), 200 to 220 (VAAG…VTIA), 237 to 257 (AVIW…TFLM), 276 to 296 (ILAM…IVLA), 337 to 357 (AVLL…WNPA), 358 to 378 (GLLD…WAMI), 402 to 422 (AHPW…ALML), and 431 to 451 (VYSV…TVNS).

The protein belongs to the amino acid-polyamine-organocation (APC) superfamily. Amino acid transporter (AAT) (TC 2.A.3.1) family.

The protein resides in the cell membrane. It carries out the reaction L-phenylalanine(in) + H(+)(in) = L-phenylalanine(out) + H(+)(out). The enzyme catalyses L-tryptophan(in) + H(+)(in) = L-tryptophan(out) + H(+)(out). The catalysed reaction is L-tyrosine(in) + H(+)(in) = L-tyrosine(out) + H(+)(out). In terms of biological role, permease that is involved in the active transport across the cytoplasmic membrane of all three aromatic amino acids, phenylalanine, tyrosine and tryptophan. This is Aromatic amino acid transport protein AroP from Corynebacterium glutamicum (strain ATCC 13032 / DSM 20300 / JCM 1318 / BCRC 11384 / CCUG 27702 / LMG 3730 / NBRC 12168 / NCIMB 10025 / NRRL B-2784 / 534).